A 602-amino-acid polypeptide reads, in one-letter code: Chaperone protein dnaK (602 aa).

Belongs to the heat shock protein 70 family.

Its subcellular location is the plastid. The protein localises to the chloroplast. Its function is as follows. Acts as a chaperone. This is Chaperone protein dnaK from Thalassiosira pseudonana (Marine diatom).